Consider the following 131-residue polypeptide: C-type natriuretic peptide (131 aa).

The first 20 residues, 1–20 (MMCKALVFAVLLLAVPLERA), serve as a signal peptide directing secretion. Positions 21–109 (DSRALRTPVD…KRALPDRAKR (89 aa)) are excised as a propeptide. Residues cysteine 115 and cysteine 131 are joined by a disulfide bond.

The protein belongs to the natriuretic peptide family. As to expression, highly expressed in brain and liver, and moderately in gut, gills and heart. Expressed to a low level in atrium, ventricle and liver of fresh water eels.

Its subcellular location is the secreted. In terms of biological role, hormone which plays a role in endochondral ossification through regulation of cartilaginous growth plate chondrocytes proliferation and differentiation. May also be vasoactive and natriuretic. May be important for freshwater adaptation. This chain is C-type natriuretic peptide (cnp), found in Anguilla japonica (Japanese eel).